The primary structure comprises 201 residues: FMN-dependent NADH:quinone oxidoreductase (201 aa).

FMN is bound by residues S9, 16-18 (SVS), and 93-96 (MYNF).

The protein belongs to the azoreductase type 1 family. As to quaternary structure, homodimer. The cofactor is FMN.

It carries out the reaction 2 a quinone + NADH + H(+) = 2 a 1,4-benzosemiquinone + NAD(+). It catalyses the reaction N,N-dimethyl-1,4-phenylenediamine + anthranilate + 2 NAD(+) = 2-(4-dimethylaminophenyl)diazenylbenzoate + 2 NADH + 2 H(+). Its function is as follows. Quinone reductase that provides resistance to thiol-specific stress caused by electrophilic quinones. Also exhibits azoreductase activity. Catalyzes the reductive cleavage of the azo bond in aromatic azo compounds to the corresponding amines. In Gluconacetobacter diazotrophicus (strain ATCC 49037 / DSM 5601 / CCUG 37298 / CIP 103539 / LMG 7603 / PAl5), this protein is FMN-dependent NADH:quinone oxidoreductase.